The sequence spans 357 residues: Peptide chain release factor 1 (357 aa).

Glutamine 234 is subject to N5-methylglutamine.

It belongs to the prokaryotic/mitochondrial release factor family. Methylated by PrmC. Methylation increases the termination efficiency of RF1.

It is found in the cytoplasm. Peptide chain release factor 1 directs the termination of translation in response to the peptide chain termination codons UAG and UAA. The polypeptide is Peptide chain release factor 1 (Nocardioides sp. (strain ATCC BAA-499 / JS614)).